A 501-amino-acid chain; its full sequence is O-phosphoseryl-tRNA(Sec) selenium transferase (501 aa).

The segment at 1-44 (MNRESFAAGERLVSPAYVRQGCEARRSHEHLIRLLLEKGKCPEN) is tetramerization. Serine 14 is subject to Phosphoserine. Arginine 75 contacts pyridoxal 5'-phosphate. The interval 96 to 106 (GRSGDISAVQP) is phosphate loop (P-loop). Substrate is bound by residues arginine 97, serine 98, and glutamine 105. Residue arginine 271 coordinates tRNA. N6-(pyridoxal phosphate)lysine is present on lysine 284. Arginine 313 is a binding site for substrate. Arginine 398 and lysine 463 together coordinate tRNA. Residues 474–493 (DKTEDVDIEEMALKLDNVLL) form an SLA/LP epitope region.

Belongs to the SepSecS family. Homotetramer formed by a catalytic dimer and a non-catalytic dimer serving as a binding platform that orients tRNASec for catalysis. Each tetramer binds the CCA ends of two tRNAs which point to the active sites of the catalytic dimer. The cofactor is pyridoxal 5'-phosphate. As to expression, primarily expressed in liver, pancreas, kidney and lung. Overexpressed in PHA-stimulated T-cells.

It is found in the cytoplasm. It catalyses the reaction O-phospho-L-seryl-tRNA(Sec) + selenophosphate + H2O = L-selenocysteinyl-tRNA(Sec) + 2 phosphate. It participates in aminoacyl-tRNA biosynthesis; selenocysteinyl-tRNA(Sec) biosynthesis; selenocysteinyl-tRNA(Sec) from L-seryl-tRNA(Sec) (archaeal/eukaryal route): step 2/2. Converts O-phosphoseryl-tRNA(Sec) to selenocysteinyl-tRNA(Sec) required for selenoprotein biosynthesis. This is O-phosphoseryl-tRNA(Sec) selenium transferase (SEPSECS) from Homo sapiens (Human).